The following is an 865-amino-acid chain: cGMP-specific 3',5'-cyclic phosphodiesterase (865 aa).

Residues 69-83 are compositionally biased toward low complexity; it reads CSCSSQQSSRADSSA. Positions 69–92 are disordered; the sequence is CSCSSQQSSRADSSAPGTPTRKIS. Ser-92 bears the Phosphoserine mark. GAF domains follow at residues 154-304 and 336-493; these read DVTA…GIVL and SLEV…GLGI. In terms of domain architecture, PDEase spans 526–850; that stretch reads ETKELQSLAA…QKWQALAEQQ (325 aa). His-603 serves as the catalytic Proton donor. Residues His-607, His-643, Asp-644, and Asp-754 each contribute to the Zn(2+) site. Mg(2+) is bound at residue Asp-644. Gln-807 is a binding site for 3',5'-cyclic GMP.

It belongs to the cyclic nucleotide phosphodiesterase family. Zn(2+) is required as a cofactor. The cofactor is Mg(2+). Post-translationally, phosphorylation is regulated by binding of cGMP to the two allosteric sites. Phosphorylation by PRKG1 leads to its activation. In terms of tissue distribution, isoform PDE5A1 and isoform PDE5A2 are highly expressed in the cerebellum, hippocampus, retina, lung, heart, spleen, and thoracic artery. Isoform PDE5A1, but not isoform PDE5A2, is also abundantly expressed in the pylorus.

It is found in the cytoplasm. The protein resides in the cytosol. The catalysed reaction is 3',5'-cyclic GMP + H2O = GMP + H(+). It functions in the pathway purine metabolism; 3',5'-cyclic GMP degradation; GMP from 3',5'-cyclic GMP: step 1/1. Inhibited by zaprinast. Plays a role in signal transduction by regulating the intracellular concentration of cyclic nucleotides. This phosphodiesterase catalyzes the specific hydrolysis of cGMP to 5'-GMP. Specifically regulates nitric-oxide-generated cGMP. In Canis lupus familiaris (Dog), this protein is cGMP-specific 3',5'-cyclic phosphodiesterase (PDE5A).